A 244-amino-acid polypeptide reads, in one-letter code: Uridylate kinase (244 aa).

An ATP-binding site is contributed by 11–14; the sequence is KLSG. Residues 19-24 are involved in allosteric activation by GTP; it reads GSLGYG. Gly53 provides a ligand contact to UMP. 2 residues coordinate ATP: Gly54 and Arg58. UMP is bound by residues Asp73 and 134–141; that span reads SGNPFFTT. ATP-binding residues include Thr161, Tyr167, and Asp170.

Belongs to the UMP kinase family. In terms of assembly, homohexamer.

The protein localises to the cytoplasm. It catalyses the reaction UMP + ATP = UDP + ADP. It functions in the pathway pyrimidine metabolism; CTP biosynthesis via de novo pathway; UDP from UMP (UMPK route): step 1/1. Allosterically activated by GTP. Inhibited by UTP. In terms of biological role, catalyzes the reversible phosphorylation of UMP to UDP. The protein is Uridylate kinase of Trichodesmium erythraeum (strain IMS101).